Consider the following 200-residue polypeptide: Holliday junction branch migration complex subunit RuvA (200 aa).

Residues 1–64 (MYAYFRGRVV…EDALQLYGFS (64 aa)) form a domain I region. The segment at 65 to 143 (SEEEKQLFRL…KLSPPGAAAT (79 aa)) is domain II. Residues 144 to 154 (PAGAVQCGIRE) form a flexible linker region. A domain III region spans residues 154-200 (EDATNALLTLGFSRTAAQQAVAGVLEANPGGSVEDVVKSALLAMHNR).

Belongs to the RuvA family. In terms of assembly, homotetramer. Forms an RuvA(8)-RuvB(12)-Holliday junction (HJ) complex. HJ DNA is sandwiched between 2 RuvA tetramers; dsDNA enters through RuvA and exits via RuvB. An RuvB hexamer assembles on each DNA strand where it exits the tetramer. Each RuvB hexamer is contacted by two RuvA subunits (via domain III) on 2 adjacent RuvB subunits; this complex drives branch migration. In the full resolvosome a probable DNA-RuvA(4)-RuvB(12)-RuvC(2) complex forms which resolves the HJ.

Its subcellular location is the cytoplasm. In terms of biological role, the RuvA-RuvB-RuvC complex processes Holliday junction (HJ) DNA during genetic recombination and DNA repair, while the RuvA-RuvB complex plays an important role in the rescue of blocked DNA replication forks via replication fork reversal (RFR). RuvA specifically binds to HJ cruciform DNA, conferring on it an open structure. The RuvB hexamer acts as an ATP-dependent pump, pulling dsDNA into and through the RuvAB complex. HJ branch migration allows RuvC to scan DNA until it finds its consensus sequence, where it cleaves and resolves the cruciform DNA. This is Holliday junction branch migration complex subunit RuvA from Chlorobium luteolum (strain DSM 273 / BCRC 81028 / 2530) (Pelodictyon luteolum).